Here is a 390-residue protein sequence, read N- to C-terminus: Succinate--CoA ligase [ADP-forming] subunit beta (390 aa).

In terms of domain architecture, ATP-grasp spans 9 to 248; the sequence is KDILRKFGVS…ISEEDPFEVE (240 aa). ATP-binding positions include Lys50, 57 to 59, Glu103, Met106, and Glu111; that span reads GRG. Asn203 and Asp217 together coordinate Mg(2+). Substrate contacts are provided by residues Asn268 and 325-327; that span reads GIV.

The protein belongs to the succinate/malate CoA ligase beta subunit family. In terms of assembly, heterotetramer of two alpha and two beta subunits. The cofactor is Mg(2+).

The catalysed reaction is succinate + ATP + CoA = succinyl-CoA + ADP + phosphate. It carries out the reaction GTP + succinate + CoA = succinyl-CoA + GDP + phosphate. It functions in the pathway carbohydrate metabolism; tricarboxylic acid cycle; succinate from succinyl-CoA (ligase route): step 1/1. In terms of biological role, succinyl-CoA synthetase functions in the citric acid cycle (TCA), coupling the hydrolysis of succinyl-CoA to the synthesis of either ATP or GTP and thus represents the only step of substrate-level phosphorylation in the TCA. The beta subunit provides nucleotide specificity of the enzyme and binds the substrate succinate, while the binding sites for coenzyme A and phosphate are found in the alpha subunit. This is Succinate--CoA ligase [ADP-forming] subunit beta from Prosthecochloris aestuarii (strain DSM 271 / SK 413).